A 170-amino-acid chain; its full sequence is Small ribosomal subunit protein uS5 (170 aa).

The 64-residue stretch at L12–V75 folds into the S5 DRBM domain.

It belongs to the universal ribosomal protein uS5 family. Part of the 30S ribosomal subunit. Contacts proteins S4 and S8.

Its function is as follows. With S4 and S12 plays an important role in translational accuracy. Functionally, located at the back of the 30S subunit body where it stabilizes the conformation of the head with respect to the body. The protein is Small ribosomal subunit protein uS5 of Wolbachia pipientis wMel.